Reading from the N-terminus, the 621-residue chain is uncharacterized protein (621 aa).

4 stretches are compositionally biased toward low complexity: residues 1–10 (MIEDNINNNE), 63–79 (TEPLTTQLSSSPTTTPS), 137–182 (NNNN…NNFN), and 309–347 (NQSIQQLQQQQQQQQQQQQQQNNNDNNNNNNNNNNNNNN). 7 disordered regions span residues 1 to 29 (MIEDNINNNENENEDKNGNGNENENDKNN), 63 to 100 (TEPLTTQLSSSPTTTPSLKKRKPKTVRNPFIGPSSNKT), 135 to 194 (DDNN…KDND), 307 to 374 (KTNQ…EDDT), 430 to 471 (YNNN…IAKR), 492 to 539 (KQSQ…IKII), and 594 to 614 (PTQINSNSSNNIVSPSSSPSK). A compositionally biased stretch (polar residues) spans 348-357 (STLTSSNSLS). Composition is skewed to low complexity over residues 431 to 459 (NNNNNNNNNNNNNNNNNNNNNNNNNNNNN), 496 to 539 (NNNN…IKII), and 597 to 613 (INSNSSNNIVSPSSSPS).

This is an uncharacterized protein from Dictyostelium discoideum (Social amoeba).